Reading from the N-terminus, the 283-residue chain is Cytosolic Fe-S cluster assembly factor CFD1 (283 aa).

26–33 (GKGGVGKS) contributes to the ATP binding site. Residues C202 and C205 each contribute to the [4Fe-4S] cluster site.

This sequence belongs to the Mrp/NBP35 ATP-binding proteins family. NUBP2/CFD1 subfamily. As to quaternary structure, heterotetramer of 2 NBP35 and 2 CFD1 chains. Requires [4Fe-4S] cluster as cofactor.

It localises to the cytoplasm. Its function is as follows. Component of the cytosolic iron-sulfur (Fe/S) protein assembly (CIA) machinery. Required for maturation of extramitochondrial Fe-S proteins. The NBP35-CFD1 heterotetramer forms a Fe-S scaffold complex, mediating the de novo assembly of an Fe-S cluster and its transfer to target apoproteins. Required for biogenesis and export of both ribosomal subunits, which may reflect a role in assembly of the Fe/S clusters in RLI1, a protein which performs rRNA processing and ribosome export. The sequence is that of Cytosolic Fe-S cluster assembly factor CFD1 from Kluyveromyces lactis (strain ATCC 8585 / CBS 2359 / DSM 70799 / NBRC 1267 / NRRL Y-1140 / WM37) (Yeast).